We begin with the raw amino-acid sequence, 359 residues long: Phospho-N-acetylmuramoyl-pentapeptide-transferase (359 aa).

A run of 10 helical transmembrane segments spans residues 7–27 (RSLT…VNSY), 28–48 (IFNS…SLVI), 82–102 (MGGI…NNYV), 103–123 (DSVG…IGFL), 147–167 (ALIA…NPLI), 179–199 (IVIF…VNLT), 203–223 (DGLA…EIFI), 229–249 (LIIY…FLKY), 256–276 (IFMG…ISIL), and 337–357 (IVEN…VLKI).

Belongs to the glycosyltransferase 4 family. MraY subfamily. Mg(2+) serves as cofactor.

It is found in the cell inner membrane. It catalyses the reaction UDP-N-acetyl-alpha-D-muramoyl-L-alanyl-gamma-D-glutamyl-meso-2,6-diaminopimeloyl-D-alanyl-D-alanine + di-trans,octa-cis-undecaprenyl phosphate = di-trans,octa-cis-undecaprenyl diphospho-N-acetyl-alpha-D-muramoyl-L-alanyl-D-glutamyl-meso-2,6-diaminopimeloyl-D-alanyl-D-alanine + UMP. Its pathway is cell wall biogenesis; peptidoglycan biosynthesis. Catalyzes the initial step of the lipid cycle reactions in the biosynthesis of the cell wall peptidoglycan: transfers peptidoglycan precursor phospho-MurNAc-pentapeptide from UDP-MurNAc-pentapeptide onto the lipid carrier undecaprenyl phosphate, yielding undecaprenyl-pyrophosphoryl-MurNAc-pentapeptide, known as lipid I. The polypeptide is Phospho-N-acetylmuramoyl-pentapeptide-transferase (Prochlorococcus marinus subsp. pastoris (strain CCMP1986 / NIES-2087 / MED4)).